The chain runs to 264 residues: uncharacterized protein (264 aa).

The interval 235–264 is disordered; sequence ESSDEEDNDDDIINNDTNNDINNDDIEIKT. Residues 237–247 show a composition bias toward acidic residues; it reads SDEEDNDDDII.

This is an uncharacterized protein from Acanthamoeba polyphaga mimivirus (APMV).